We begin with the raw amino-acid sequence, 169 residues long: Allophycocyanin subunit beta-18 (169 aa).

Residue asparagine 72 is modified to N4-methylasparagine. Cysteine 82 contacts (2R,3E)-phycocyanobilin.

This sequence belongs to the phycobiliprotein family. In terms of assembly, heterodimer of ApcE and this beta chain. In terms of processing, contains one covalently linked bilin chromophore. The chromophore is added by phycocyanobilin lyase CpcS 1.

Its subcellular location is the cellular thylakoid membrane. In terms of biological role, a variant beta-allophycocyanin (AP) which forms a complex with ApcE, a phycobilisome terminal emitter that influences energy transfer to photosystem II. This Nostoc sp. (strain PCC 7120 / SAG 25.82 / UTEX 2576) protein is Allophycocyanin subunit beta-18 (apcF).